Consider the following 410-residue polypeptide: Testis-specific protein TEX28 (410 aa).

The disordered stretch occupies residues 1–43 (MVLKAEHTRSPSATLPSNVPSCRSLSSSEDGPSGPSSLADGGL). The span at 10-23 (SPSATLPSNVPSCR) shows a compositional bias: polar residues. Residues 24–38 (SLSSSEDGPSGPSSL) show a composition bias toward low complexity. Residues 93–128 (QAFEKVNQRASATIAQIEHRLHQCHQQLQELEEGCR) are a coiled coil. A disordered region spans residues 137–164 (ESDPANCEPPSEKALLSEPPEPGGEDGP). Residues 185 to 245 (QGTCLETEDV…LLLESLQEEK (61 aa)) are a coiled coil. Residues 336–358 (LSLATVLLVFVSTLCACPSSLIS) form a helical membrane-spanning segment.

It belongs to the TEX28 family. Testis specific.

The protein localises to the membrane. The sequence is that of Testis-specific protein TEX28 (TEX28) from Homo sapiens (Human).